A 348-amino-acid chain; its full sequence is GTPase Obg (348 aa).

In terms of domain architecture, Obg spans 1 to 159; it reads MKFLDQAKIY…KTIILRLKLI (159 aa). In terms of domain architecture, OBG-type G spans 160–327; it reads ADAGLVGLPN…VLRLAADEIW (168 aa). GTP-binding positions include 166–173, 191–195, 212–215, 279–282, and 308–310; these read GLPNAGKS, FTTLT, DIPG, NKMD, and SGV. Mg(2+) contacts are provided by Ser-173 and Thr-193.

The protein belongs to the TRAFAC class OBG-HflX-like GTPase superfamily. OBG GTPase family. As to quaternary structure, monomer. Mg(2+) is required as a cofactor.

The protein resides in the cytoplasm. In terms of biological role, an essential GTPase which binds GTP, GDP and possibly (p)ppGpp with moderate affinity, with high nucleotide exchange rates and a fairly low GTP hydrolysis rate. Plays a role in control of the cell cycle, stress response, ribosome biogenesis and in those bacteria that undergo differentiation, in morphogenesis control. The chain is GTPase Obg from Parvibaculum lavamentivorans (strain DS-1 / DSM 13023 / NCIMB 13966).